Here is a 292-residue protein sequence, read N- to C-terminus: Formamidopyrimidine-DNA glycosylase (292 aa).

Pro-2 functions as the Schiff-base intermediate with DNA in the catalytic mechanism. Glu-3 serves as the catalytic Proton donor. The Proton donor; for beta-elimination activity role is filled by Lys-60. DNA is bound by residues His-109, Arg-128, and Arg-173. The FPG-type zinc finger occupies Asn-258 to Lys-292. Residue Arg-282 is the Proton donor; for delta-elimination activity of the active site.

Belongs to the FPG family. In terms of assembly, monomer. It depends on Zn(2+) as a cofactor.

The enzyme catalyses Hydrolysis of DNA containing ring-opened 7-methylguanine residues, releasing 2,6-diamino-4-hydroxy-5-(N-methyl)formamidopyrimidine.. It carries out the reaction 2'-deoxyribonucleotide-(2'-deoxyribose 5'-phosphate)-2'-deoxyribonucleotide-DNA = a 3'-end 2'-deoxyribonucleotide-(2,3-dehydro-2,3-deoxyribose 5'-phosphate)-DNA + a 5'-end 5'-phospho-2'-deoxyribonucleoside-DNA + H(+). In terms of biological role, involved in base excision repair of DNA damaged by oxidation or by mutagenic agents. Acts as a DNA glycosylase that recognizes and removes damaged bases. Has a preference for oxidized purines, such as 7,8-dihydro-8-oxoguanine (8-oxoG). Has AP (apurinic/apyrimidinic) lyase activity and introduces nicks in the DNA strand. Cleaves the DNA backbone by beta-delta elimination to generate a single-strand break at the site of the removed base with both 3'- and 5'-phosphates. The sequence is that of Formamidopyrimidine-DNA glycosylase from Prochlorococcus marinus (strain MIT 9301).